Consider the following 172-residue polypeptide: Trypsin inhibitor DE-3 (172 aa).

Disulfide bonds link cysteine 39–cysteine 83 and cysteine 132–cysteine 139.

This sequence belongs to the protease inhibitor I3 (leguminous Kunitz-type inhibitor) family.

Inhibition of trypsin. The protein is Trypsin inhibitor DE-3 of Erythrina variegata (Indian coral tree).